The primary structure comprises 138 residues: Cysteine desulfuration protein SufE (138 aa).

Cys51 functions as the Cysteine persulfide intermediate in the catalytic mechanism.

The protein belongs to the SufE family. In terms of assembly, homodimer. Interacts with SufS.

The protein resides in the cytoplasm. It functions in the pathway cofactor biosynthesis; iron-sulfur cluster biosynthesis. Its function is as follows. Participates in cysteine desulfuration mediated by SufS. Cysteine desulfuration mobilizes sulfur from L-cysteine to yield L-alanine and constitutes an essential step in sulfur metabolism for biosynthesis of a variety of sulfur-containing biomolecules. Functions as a sulfur acceptor for SufS, by mediating the direct transfer of the sulfur atom from the S-sulfanylcysteine of SufS, an intermediate product of cysteine desulfuration process. This chain is Cysteine desulfuration protein SufE, found in Salmonella agona (strain SL483).